The chain runs to 132 residues: Protein NrdI (132 aa).

Belongs to the NrdI family.

Its function is as follows. Probably involved in ribonucleotide reductase function. The sequence is that of Protein NrdI from Bartonella tribocorum (strain CIP 105476 / IBS 506).